Consider the following 216-residue polypeptide: RNA pyrophosphohydrolase (216 aa).

The Nudix hydrolase domain occupies 6-149 (GFRPNVGIIL…KRDVYQLALT (144 aa)). Residues 38–59 (GGIKYGETPMQAMYRELHEETG) carry the Nudix box motif. A disordered region spans residues 159 to 191 (AQRTDKSRGPRAPRYPRVANGHAASETPAAIDT).

Belongs to the Nudix hydrolase family. RppH subfamily. A divalent metal cation serves as cofactor.

Its function is as follows. Accelerates the degradation of transcripts by removing pyrophosphate from the 5'-end of triphosphorylated RNA, leading to a more labile monophosphorylated state that can stimulate subsequent ribonuclease cleavage. This Burkholderia pseudomallei (strain 668) protein is RNA pyrophosphohydrolase.